The chain runs to 556 residues: Formate--tetrahydrofolate ligase (556 aa).

65–72 (TPAGEGKS) contacts ATP.

This sequence belongs to the formate--tetrahydrofolate ligase family.

It carries out the reaction (6S)-5,6,7,8-tetrahydrofolate + formate + ATP = (6R)-10-formyltetrahydrofolate + ADP + phosphate. The protein operates within one-carbon metabolism; tetrahydrofolate interconversion. This Streptococcus pneumoniae (strain ATCC 700669 / Spain 23F-1) protein is Formate--tetrahydrofolate ligase.